A 96-amino-acid polypeptide reads, in one-letter code: Putative pterin-4-alpha-carbinolamine dehydratase (96 aa).

Belongs to the pterin-4-alpha-carbinolamine dehydratase family.

It carries out the reaction (4aS,6R)-4a-hydroxy-L-erythro-5,6,7,8-tetrahydrobiopterin = (6R)-L-erythro-6,7-dihydrobiopterin + H2O. This is Putative pterin-4-alpha-carbinolamine dehydratase from Prochlorococcus marinus (strain MIT 9303).